Consider the following 218-residue polypeptide: N-(5'-phosphoribosyl)anthranilate isomerase (218 aa).

It belongs to the TrpF family.

The enzyme catalyses N-(5-phospho-beta-D-ribosyl)anthranilate = 1-(2-carboxyphenylamino)-1-deoxy-D-ribulose 5-phosphate. It functions in the pathway amino-acid biosynthesis; L-tryptophan biosynthesis; L-tryptophan from chorismate: step 3/5. The sequence is that of N-(5'-phosphoribosyl)anthranilate isomerase from Bordetella parapertussis (strain 12822 / ATCC BAA-587 / NCTC 13253).